Here is a 117-residue protein sequence, read N- to C-terminus: uncharacterized protein (117 aa).

This is an uncharacterized protein from Fowlpox virus (strain NVSL) (FPV).